Consider the following 430-residue polypeptide: Probable sugar isomerase R00627 (430 aa).

3 residues coordinate Mn(2+): His-257, Asp-289, and Asp-291.

This sequence belongs to the rhamnose isomerase family. Mn(2+) is required as a cofactor.

The sequence is that of Probable sugar isomerase R00627 from Rhizobium meliloti (strain 1021) (Ensifer meliloti).